Here is a 573-residue protein sequence, read N- to C-terminus: O-fucosyltransferase 20 (573 aa).

Residues Met1–Arg60 are Cytoplasmic-facing. A helical; Signal-anchor for type II membrane protein transmembrane segment spans residues Ile61–Val81. Over Asp82–Ala573 the chain is Lumenal. N-linked (GlcNAc...) asparagine glycosylation is present at Asn138. Substrate is bound at residue His344–Arg346. Residues Asn385 and Asn517 are each glycosylated (N-linked (GlcNAc...) asparagine). Over residues Ala547–Val556 the composition is skewed to basic and acidic residues. The tract at residues Ala547–Ala573 is disordered. The segment covering Asp563–Ala573 has biased composition (polar residues).

The protein belongs to the glycosyltransferase GT106 family. Interacts with RACK1A. As to expression, highly expressed in shoot apical meristem (SAM) and in young vegetative tissues.

The protein localises to the golgi apparatus membrane. It functions in the pathway glycan metabolism. In terms of biological role, may play a role in the biosynthesis of matrix polysaccharides and contribute to the biomechanics and development of the plant cell wall. This Arabidopsis thaliana (Mouse-ear cress) protein is O-fucosyltransferase 20.